The chain runs to 444 residues: MIVHPIDYRYGTPEMKRIWSEDSKIKRMVRVEMALLRALAKKGYLSEEEAKEAKKKAYSVTPERVKEIEAEIKHDIMALVKAITEATGCRWVHFGATSNDIIDTATALQLRDSLKILEVKIKRLAKVLADKALEYKDVVCLGRTHGQAALPTTYGFRFALWAAEVARHYIRLQQMKDRLLVGQMSGAVGTQAAFGKDGFEIEEEVMRLLNLKPALISSQIIPRDSYCEYLEFLANLAATLEKIALNFRLLQRAEVGELMEKFEAKQVGSSTMPHKRNPIDCENVCGLARVVRGFVEPQHQSAILWEERDLTNSSAERITLVESTVLADHILTKMIKVVSSVSLNLENIRRNLEMQRGLNLSEAVMIEMTKRGVGRQEAHEILRQAAMRAYENNSSLLDELLKDERVMKYFKEDELREILKPENYLGTARERVERVVRWVNEVLK.

Residues 9 to 10, 73 to 75, and 97 to 98 each bind N(6)-(1,2-dicarboxyethyl)-AMP; these read RY, KHD, and TS. Catalysis depends on His-145, which acts as the Proton donor/acceptor. Residue Gln-219 participates in N(6)-(1,2-dicarboxyethyl)-AMP binding. Residue Ser-269 is the Proton donor/acceptor of the active site. N(6)-(1,2-dicarboxyethyl)-AMP-binding positions include Ser-270, 275–277, Asn-283, and 314–318; these read KRN and SAERI.

Belongs to the lyase 1 family. Adenylosuccinate lyase subfamily. Homotetramer. Residues from neighboring subunits contribute catalytic and substrate-binding residues to each active site.

It carries out the reaction N(6)-(1,2-dicarboxyethyl)-AMP = fumarate + AMP. The enzyme catalyses (2S)-2-[5-amino-1-(5-phospho-beta-D-ribosyl)imidazole-4-carboxamido]succinate = 5-amino-1-(5-phospho-beta-D-ribosyl)imidazole-4-carboxamide + fumarate. Its pathway is purine metabolism; AMP biosynthesis via de novo pathway; AMP from IMP: step 2/2. It participates in purine metabolism; IMP biosynthesis via de novo pathway; 5-amino-1-(5-phospho-D-ribosyl)imidazole-4-carboxamide from 5-amino-1-(5-phospho-D-ribosyl)imidazole-4-carboxylate: step 2/2. Functionally, catalyzes two reactions in de novo purine nucleotide biosynthesis. Catalyzes the breakdown of 5-aminoimidazole- (N-succinylocarboxamide) ribotide (SAICAR or 2-[5-amino-1-(5-phospho-beta-D-ribosyl)imidazole-4-carboxamido]succinate) to 5-aminoimidazole-4-carboxamide ribotide (AICAR or 5-amino-1-(5-phospho-beta-D-ribosyl)imidazole-4-carboxamide) and fumarate, and of adenylosuccinate (ADS or N(6)-(1,2-dicarboxyethyl)-AMP) to adenosine monophosphate (AMP) and fumarate. The protein is Adenylosuccinate lyase (purB) of Archaeoglobus fulgidus (strain ATCC 49558 / DSM 4304 / JCM 9628 / NBRC 100126 / VC-16).